Here is a 252-residue protein sequence, read N- to C-terminus: Triosephosphate isomerase (252 aa).

10–12 (NWK) is a substrate binding site. Catalysis depends on His-96, which acts as the Electrophile. Catalysis depends on Glu-168, which acts as the Proton acceptor. Residues Gly-174, Ser-214, and 235-236 (GG) contribute to the substrate site.

This sequence belongs to the triosephosphate isomerase family. As to quaternary structure, homodimer.

It is found in the cytoplasm. The catalysed reaction is D-glyceraldehyde 3-phosphate = dihydroxyacetone phosphate. It participates in carbohydrate biosynthesis; gluconeogenesis. The protein operates within carbohydrate degradation; glycolysis; D-glyceraldehyde 3-phosphate from glycerone phosphate: step 1/1. Its function is as follows. Involved in the gluconeogenesis. Catalyzes stereospecifically the conversion of dihydroxyacetone phosphate (DHAP) to D-glyceraldehyde-3-phosphate (G3P). This is Triosephosphate isomerase from Streptococcus pyogenes serotype M1.